Reading from the N-terminus, the 384-residue chain is DNA repair protein RAD51 homolog 2 (384 aa).

Residues 1–75 form an interaction with RAD51C region; the sequence is MGSKKLKRVG…TAYGIKAQRS (75 aa). 108–115 is an ATP binding site; the sequence is GPPGCGKT.

Belongs to the RecA family. RAD51 subfamily. As to quaternary structure, part of the BCDX2 complex consisting of RAD51B, RAD51C, RAD51D and XRCC2; the complex has a ring-like structure arranged into a flat disc around a central channel. The BCDX2 subcomplex RAD51B:RAD51C interacts with RAD51. Interacts with SWSAP1; involved in homologous recombination repair. Interacts with HELQ. Phosphorylated on tyrosine residues by BCR-ABL. As to expression, expressed in a wide range of tissues.

The protein resides in the nucleus. Involved in the homologous recombination repair (HRR) pathway of double-stranded DNA breaks arising during DNA replication or induced by DNA-damaging agents. May promote the assembly of presynaptic RAD51 nucleoprotein filaments. Binds single-stranded DNA and double-stranded DNA and has DNA-dependent ATPase activity. Part of the RAD51 paralog protein complex BCDX2 which acts in the BRCA1-BRCA2-dependent HR pathway. Upon DNA damage, BCDX2 acts downstream of BRCA2 recruitment and upstream of RAD51 recruitment. BCDX2 binds predominantly to the intersection of the four duplex arms of the Holliday junction and to junction of replication forks. The BCDX2 complex was originally reported to bind single-stranded DNA, single-stranded gaps in duplex DNA and specifically to nicks in duplex DNA. The BCDX2 subcomplex RAD51B:RAD51C exhibits single-stranded DNA-dependent ATPase activity suggesting an involvement in early stages of the HR pathway. The polypeptide is DNA repair protein RAD51 homolog 2 (RAD51B) (Homo sapiens (Human)).